A 495-amino-acid polypeptide reads, in one-letter code: MAQGNNYGQTSNGVADESPNMLVYRKMEDVIARMQDEKNGIPIRTVKSFLSKIPSVFSGSDIVQWLIKNLTIEDPVEALHLGTLMAAHGYFFPISDHVLTLKDDGTFYRFQTPYFWPSNCWEPENTDYAVYLCKRTMQNKARLELADYEAESLARLQRAFARKWEFIFMQAEAQAKVDKKRDKIERKILDSQERAFWDVHRPVPGCVNTTEVDIKKSSRMRNPHKTRKSVYGLQNDIRSHSPTHTPTPETKPPTEDELQQQIKYWQIQLDRHRLKMSKVADSLLSYTEQYLEYDPFLLPPDPSNPWLSDDTTFWELEASKEPSQQRVKRWGFGMDEALKDPVGREQFLKFLESEFSSENLRFWLAVEDLKKRPIKEVPSRVQEIWQEFLAPGAPSAINLDSKSYDKTTQNVKEPGRYTFEDAQEHIYKLMKSDSYPRFIRSSAYQELLQAKKKSGNSMDRRTSFEKFAQNVGRNIPIFPCHKNCTPTLRASTNLL.

Residues 37–112 (EKNGIPIRTV…DDGTFYRFQT (76 aa)) enclose the DEP domain. Phosphoserine occurs at positions 229 and 241. The disordered stretch occupies residues 235 to 256 (NDIRSHSPTHTPTPETKPPTED). Thr243 is subject to Phosphothreonine. The region spanning 255 to 316 (EDELQQQIKY…LSDDTTFWEL (62 aa)) is the G protein gamma domain. The RGS domain occupies 333 to 448 (GMDEALKDPV…IRSSAYQELL (116 aa)). Residue Ser434 is modified to Phosphoserine.

As to quaternary structure, interacts with GNB5, forming the RGS7-GNB5 complex. Interacts with GPR158; promotes the GTPase activator activity of the RGS7-GNB5 complex in absence of glycine, in contrast GTPase activator activity of the RGS7-GNB5 complex is inhibited in presence of glycine. Interacts with GPR179. Interacts with PKD1; this prevents rapid proteasomal degradation. Interacts with RGS7BP, leading to regulate the subcellular location of the heterodimer formed with GNB5. Interacts (phosphorylated form) with 14-3-3 protein YWHAQ. Interacts with SNAPIN. Interacts with GNAI1. Interacts with GNAO1, GNAI3 and GNAZ. In terms of processing, palmitoylated. Post-translationally, ubiquitinated, leading to rapid proteasomal degradation. Phosphorylation and subsequent interaction with 14-3-3 proteins inhibits GAP activity.

Its subcellular location is the cytoplasm. It is found in the cytosol. The protein localises to the cell membrane. It localises to the membrane. Functionally, GTPase activator component of the RGS7-GNB5 complex that regulates G protein-coupled receptor signaling cascades. The RGS7-GNB5 complex acts as an inhibitor signal transduction by promoting the GTPase activity of G protein alpha subunits, such as GNAO1, thereby driving them into their inactive GDP-bound form. May play a role in synaptic vesicle exocytosis. Glycine-dependent regulation of the RGS7-GNB5 complex by GPR158 affects mood and cognition via its ability to regulate neuronal excitability in L2/L3 pyramidal neurons of the prefrontal cortex. Modulates the activity of potassium channels that are activated by GNAO1 in response to muscarinic acetylcholine receptor M2/CHRM2 signaling. This Homo sapiens (Human) protein is Regulator of G-protein signaling 7 (RGS7).